A 215-amino-acid chain; its full sequence is Pyridoxine/pyridoxamine 5'-phosphate oxidase (215 aa).

Substrate-binding positions include 9-12 (RRDY) and Lys-69. Residues 64-69 (RILLLK), 79-80 (FT), Lys-86, and Gln-108 contribute to the FMN site. The substrate site is built by Tyr-126, Arg-130, and Ser-134. FMN-binding positions include 143–144 (QS) and Trp-188. 194–196 (RLH) contacts substrate. FMN is bound at residue Arg-198.

This sequence belongs to the pyridoxamine 5'-phosphate oxidase family. As to quaternary structure, homodimer. The cofactor is FMN.

The enzyme catalyses pyridoxamine 5'-phosphate + O2 + H2O = pyridoxal 5'-phosphate + H2O2 + NH4(+). The catalysed reaction is pyridoxine 5'-phosphate + O2 = pyridoxal 5'-phosphate + H2O2. The protein operates within cofactor metabolism; pyridoxal 5'-phosphate salvage; pyridoxal 5'-phosphate from pyridoxamine 5'-phosphate: step 1/1. Its pathway is cofactor metabolism; pyridoxal 5'-phosphate salvage; pyridoxal 5'-phosphate from pyridoxine 5'-phosphate: step 1/1. Functionally, catalyzes the oxidation of either pyridoxine 5'-phosphate (PNP) or pyridoxamine 5'-phosphate (PMP) into pyridoxal 5'-phosphate (PLP). The polypeptide is Pyridoxine/pyridoxamine 5'-phosphate oxidase (Pseudomonas fluorescens (strain ATCC BAA-477 / NRRL B-23932 / Pf-5)).